Reading from the N-terminus, the 327-residue chain is GTPase Obg (327 aa).

An Obg domain is found at 1–159 (MQFIDQANII…WEVQLELKLL (159 aa)). One can recognise an OBG-type G domain in the interval 160–327 (AEVGIIGLPN…SLLSEVWKRI (168 aa)). ATP contacts are provided by residues 166–173 (GLPNAGKS), 191–195 (FTTLI), 213–216 (DIPG), 280–283 (NKME), and 309–311 (SSS). Mg(2+) is bound by residues Ser173 and Thr193.

The protein belongs to the TRAFAC class OBG-HflX-like GTPase superfamily. OBG GTPase family. As to quaternary structure, monomer. It depends on Mg(2+) as a cofactor.

It localises to the cytoplasm. Functionally, an essential GTPase which binds GTP, GDP and possibly (p)ppGpp with moderate affinity, with high nucleotide exchange rates and a fairly low GTP hydrolysis rate. Plays a role in control of the cell cycle, stress response, ribosome biogenesis and in those bacteria that undergo differentiation, in morphogenesis control. The sequence is that of GTPase Obg from Prochlorococcus marinus (strain MIT 9215).